The chain runs to 694 residues: MIAHLLCILSYNFNTSVILNVYSKLTMFCTTNTLPMDLLLKQGSLKQEVESFCYQIVSESNDQKVGILQSENEQLQPSVSKKSEGELSRVKFMSSSNKITTFSKKPKRRKYDESYLSFGFTYFGNRDAPHAQCVLCKKILSNSSLAPSKLRRHLETKHAAYKDKDISFFKQHLDSPENNKPPTPKIVNTDNESATEASYNVSYHIALSGEAHTIGELLIKPCAKDVVMRMFDEQYSKKIDAVQLSNSTVARRIKDLAADIEEELVCRLKICDGFSLQLDESADVSGLAVLLVFVRYRFNKSIEEDLLLCESLQSNATGEEIFNCINSFMQKHEIEWEKCVDVCSDASRAMDGKIAEAVTLIKYVAPESTSSHCLLYRHALAVKIMPTSLKNVLDQAVQIINYIKARPHQSRLLKILCEEMGAQHTALLLNTEVRWLSRGKVLVRLFELRRELLVFMDSAFRLSDCLTNSSWLLRLAYLADIFTKLNEVNLSMQGKNVTVFTVFDKMSSLLRKLEFWASSVEEENFDCFPTLSDFLTEINSTVDKDICSAIVQHLRGLRSTLLKYFPVTNDNNTWVRNPFTVTVKPASLVARDYESLIDLTSDSQVKQNFSELSLNDFWSSLIQEYPSIARRAVRVLLPFATMHLCETGFSYYAATKTKYRKRLDAAPHMRIRLSNITPNIKRICDKKTQKHCSH.

The segment at Arg-109 to Asp-165 adopts a BED-type zinc-finger fold. Positions 133, 136, 153, and 158 each coordinate Zn(2+).

In Canis lupus familiaris (Dog), this protein is Zinc finger BED domain-containing protein 5 (ZBED5).